Here is a 426-residue protein sequence, read N- to C-terminus: Serine--tRNA ligase (426 aa).

233–235 (TAE) provides a ligand contact to L-serine. 264 to 266 (RRE) contributes to the ATP binding site. E287 contributes to the L-serine binding site. 351–354 (EISS) provides a ligand contact to ATP. S386 serves as a coordination point for L-serine.

This sequence belongs to the class-II aminoacyl-tRNA synthetase family. Type-1 seryl-tRNA synthetase subfamily. Homodimer. The tRNA molecule binds across the dimer.

The protein resides in the cytoplasm. It catalyses the reaction tRNA(Ser) + L-serine + ATP = L-seryl-tRNA(Ser) + AMP + diphosphate + H(+). The enzyme catalyses tRNA(Sec) + L-serine + ATP = L-seryl-tRNA(Sec) + AMP + diphosphate + H(+). Its pathway is aminoacyl-tRNA biosynthesis; selenocysteinyl-tRNA(Sec) biosynthesis; L-seryl-tRNA(Sec) from L-serine and tRNA(Sec): step 1/1. In terms of biological role, catalyzes the attachment of serine to tRNA(Ser). Is also able to aminoacylate tRNA(Sec) with serine, to form the misacylated tRNA L-seryl-tRNA(Sec), which will be further converted into selenocysteinyl-tRNA(Sec). The sequence is that of Serine--tRNA ligase from Prochlorococcus marinus (strain NATL1A).